Consider the following 319-residue polypeptide: 7-methylguanosine phosphate-specific 5'-nucleotidase (319 aa).

Catalysis depends on aspartate 55, which acts as the Nucleophile. Mg(2+) is bound by residues aspartate 55 and aspartate 57. The active-site Proton donor is aspartate 57. Glutamate 103 lines the CMP pocket. N(7)-methyl-GMP-binding residues include glutamate 103 and serine 124. Position 171 to 172 (serine 171 to alanine 172) interacts with substrate. Aspartate 245 contributes to the Mg(2+) binding site.

This sequence belongs to the pyrimidine 5'-nucleotidase family. Monomer. Requires Mg(2+) as cofactor.

It catalyses the reaction N(7)-methyl-GMP + H2O = N(7)-methylguanosine + phosphate. It carries out the reaction CMP + H2O = cytidine + phosphate. The enzyme catalyses a ribonucleoside 5'-phosphate + H2O = a ribonucleoside + phosphate. With respect to regulation, inhibited by high levels of AMP. In terms of biological role, specifically hydrolyzes 7-methylguanosine monophosphate (m(7)GMP) to 7-methylguanosine and inorganic phosphate. Also able to mediate hydrolysis of diphosphate (m(7)GDP) to 7-methylguanosine and 2 inorganic phosphate with lower activity. The specific activity for m(7)GMP may protect cells against undesired salvage of m(7)GMP and its incorporation into nucleic acids. Also has weak activity for CMP. UMP and purine nucleotides are poor substrates. This is 7-methylguanosine phosphate-specific 5'-nucleotidase from Drosophila melanogaster (Fruit fly).